The primary structure comprises 206 residues: Large ribosomal subunit protein uL4 (206 aa).

The disordered stretch occupies residues 65-85; sequence KQKGSGGARHGDRKAPQFRGG.

This sequence belongs to the universal ribosomal protein uL4 family. In terms of assembly, part of the 50S ribosomal subunit.

Its function is as follows. One of the primary rRNA binding proteins, this protein initially binds near the 5'-end of the 23S rRNA. It is important during the early stages of 50S assembly. It makes multiple contacts with different domains of the 23S rRNA in the assembled 50S subunit and ribosome. Forms part of the polypeptide exit tunnel. The protein is Large ribosomal subunit protein uL4 of Parvibaculum lavamentivorans (strain DS-1 / DSM 13023 / NCIMB 13966).